Here is a 355-residue protein sequence, read N- to C-terminus: Peptide chain release factor 1 (355 aa).

The residue at position 233 (Gln-233) is an N5-methylglutamine.

Belongs to the prokaryotic/mitochondrial release factor family. Post-translationally, methylated by PrmC. Methylation increases the termination efficiency of RF1.

It is found in the cytoplasm. Its function is as follows. Peptide chain release factor 1 directs the termination of translation in response to the peptide chain termination codons UAG and UAA. The chain is Peptide chain release factor 1 from Rickettsia typhi (strain ATCC VR-144 / Wilmington).